A 534-amino-acid chain; its full sequence is Serine protease vicPa (534 aa).

The signal sequence occupies residues 1–17 (MLCYLLIHILCLQAVLG). Asn-65 and Asn-126 each carry an N-linked (GlcNAc...) asparagine glycan. The Charge relay system role is filled by Ser-174. N-linked (GlcNAc...) asparagine glycans are attached at residues Asn-297, Asn-416, and Asn-436. Catalysis depends on Asp-450, which acts as the Charge relay system.

Belongs to the peptidase S28 family.

Its pathway is mycotoxin biosynthesis. Serine protease, part of the gene cluster that mediates the biosynthesis of the secondary metabolite victorin, the molecular basis for Victoria blight of oats. Within the pathway, vicPa and vicPb are probably involved in the processing of the vicA1 and vicA2 precursors. The pathway starts with the processing of the precursor vicA1 by several endopeptidases including kexin proteases as well as the cluster-specific S28 family peptidases vicPa and vicPb to produce 7 identical copies of the hexapeptide Gly-Leu-Lys-Leu-Ala-Phe. After being excised from the precursor peptide, the core peptides are cyclized and modified post-translationally by enzymes encoded within the gene cluster. The ustYa family oxidase vicYb is required for the formation of the macrocycle in victorin and the copper amine oxidases (CAOs) vicK1 and vicK2 are responsible for converting victorin to the active form by oxidizing the N-terminal glycyl residue in the peptides to glyoxylate. Relaxed substrate specificity of enzymes in the victorin biosynthetic pathway results in a metabolic grid that produces a set of analogs including victorinines B, C, E or HV-toxin M. In Bipolaris victoriae (strain FI3) (Victoria blight of oats agent), this protein is Serine protease vicPa.